A 436-amino-acid polypeptide reads, in one-letter code: Amino acid transporter AVT3C (436 aa).

The segment covering 1 to 13 has biased composition (polar residues); it reads MGFQNEASSSSYT. The tract at residues 1 to 21 is disordered; sequence MGFQNEASSSSYTLKIPPPAR. Topologically, residues 1-38 are cytoplasmic; it reads MGFQNEASSSSYTLKIPPPAREDSPLLGKGPPLSSQFK. Residues 39–59 traverse the membrane as a helical segment; sequence TFANVFIAVVGAGVLGLPYAF. Residues 60-65 lie on the Vacuolar side of the membrane; it reads KRTGWL. The helical transmembrane segment at 66–86 threads the bilayer; sequence MGVLLLVSVSVLTHHCMMLLV. Residues 87 to 118 are Cytoplasmic-facing; that stretch reads YTRRKLDSFNAGISKIGSFGDLGFAVCGSLGR. A helical membrane pass occupies residues 119-139; the sequence is IVVDLFIILSQAGFCVGYLIF. The Vacuolar segment spans residues 140–166; it reads IGTTLANLSDPESPTSLRHQFTRLGSE. Residues 167-187 form a helical membrane-spanning segment; that stretch reads FLGVSSKSLYIWGCFPFQLGL. The Cytoplasmic segment spans residues 188–195; that stretch reads NSIKTLTH. The helical transmembrane segment at 196-216 threads the bilayer; that stretch reads LAPLSIFADIVDLGAMAVVIV. Topologically, residues 217 to 228 are vacuolar; the sequence is EDSMIILKQRPD. A helical membrane pass occupies residues 229-249; it reads VVAFGGMSLFLYGMGVAVYSF. The Cytoplasmic segment spans residues 250–273; that stretch reads EGVGMVLPLESEMKDKDKFGKVLA. The helical transmembrane segment at 274-294 threads the bilayer; it reads LGMGFISLIYIAFGILGYLAF. At 295–309 the chain is on the vacuolar side; that stretch reads GEDTMDIITANLGAG. The chain crosses the membrane as a helical span at residues 310 to 330; sequence LVSTVVQLGLCINLFFTFPLM. Topologically, residues 331–352 are cytoplasmic; that stretch reads MNPVFEIVERRFSRGMYSAWLR. The helical transmembrane segment at 353-373 threads the bilayer; sequence WVLVLAVTLVALFVPNFADFL. At 374-376 the chain is on the vacuolar side; the sequence is SLV. A helical membrane pass occupies residues 377–397; it reads GSSTCCVLGFVLPALFHLLVF. Residues 398-411 lie on the Cytoplasmic side of the membrane; the sequence is KEEMGWLQWSSDTA. The chain crosses the membrane as a helical span at residues 412–432; sequence IVVLGVVLAVSGTWSSLSEIF. The Vacuolar portion of the chain corresponds to 433–436; that stretch reads SVKV.

This sequence belongs to the amino acid/polyamine transporter 2 family. Amino acid/auxin permease (AAAP) (TC 2.A.18.8) subfamily. As to expression, ubiquitous.

The protein localises to the vacuole membrane. Its function is as follows. Translocates preferentially neutral amino acids from the vacuole to the cytoplasm. The chain is Amino acid transporter AVT3C from Arabidopsis thaliana (Mouse-ear cress).